Here is a 382-residue protein sequence, read N- to C-terminus: Small ribosomal subunit protein mS35 (382 aa).

Residues 363–375 show a composition bias toward gly residues; the sequence is GRGGKALPGGKGG. Residues 363–382 are disordered; sequence GRGGKALPGGKGGKMQRSKR.

The protein belongs to the mitochondrion-specific ribosomal protein mS35 family. As to quaternary structure, component of the mitochondrial small ribosomal subunit (mt-SSU). Mature N.crassa 74S mitochondrial ribosomes consist of a small (37S) and a large (54S) subunit. The 37S small subunit contains a 16S ribosomal RNA (16S mt-rRNA) and 32 different proteins. The 54S large subunit contains a 23S rRNA (23S mt-rRNA) and 42 different proteins.

It is found in the mitochondrion. In terms of biological role, component of the mitochondrial ribosome (mitoribosome), a dedicated translation machinery responsible for the synthesis of mitochondrial genome-encoded proteins, including at least some of the essential transmembrane subunits of the mitochondrial respiratory chain. The mitoribosomes are attached to the mitochondrial inner membrane and translation products are cotranslationally integrated into the membrane. This Neurospora crassa (strain ATCC 24698 / 74-OR23-1A / CBS 708.71 / DSM 1257 / FGSC 987) protein is Small ribosomal subunit protein mS35 (rsm24).